The sequence spans 2291 residues: Protein Ycf2 (2291 aa).

G1645–S1652 is an ATP binding site.

Belongs to the Ycf2 family.

The protein resides in the plastid. It is found in the chloroplast stroma. In terms of biological role, probable ATPase of unknown function. Its presence in a non-photosynthetic plant (Epifagus virginiana) and experiments in tobacco indicate that it has an essential function which is probably not related to photosynthesis. The protein is Protein Ycf2 of Olimarabidopsis pumila (Dwarf rocket).